Consider the following 390-residue polypeptide: Stearoyl-[acyl-carrier-protein] 9-desaturase, chloroplastic (390 aa).

The N-terminal 27 residues, 1–27 (MALKLCFPPHKMPSFPDARIRSHRVFM), are a transit peptide targeting the chloroplast. Positions 132, 170, 173, 223, 256, and 259 each coordinate Fe cation.

Belongs to the fatty acid desaturase type 2 family. In terms of assembly, homodimer. The cofactor is Fe(2+).

It localises to the plastid. It is found in the chloroplast. It catalyses the reaction octadecanoyl-[ACP] + 2 reduced [2Fe-2S]-[ferredoxin] + O2 + 2 H(+) = (9Z)-octadecenoyl-[ACP] + 2 oxidized [2Fe-2S]-[ferredoxin] + 2 H2O. It participates in lipid metabolism; fatty acid metabolism. Converts stearoyl-ACP to oleoyl-ACP by introduction of a cis double bond between carbons 9 and 10 of the acyl chain. This chain is Stearoyl-[acyl-carrier-protein] 9-desaturase, chloroplastic, found in Olea europaea (Common olive).